Consider the following 139-residue polypeptide: GSK3-beta interaction protein (139 aa).

The tract at residues 1-22 is disordered; the sequence is METDCNPMELSSMSGFEEGSEL. Residues 41–45 are required for PRKAR2A interaction; contributes to a protective effect against H(2)O(2)-induced apoptosis; it reads VNDVL. An interaction with GSK3B and acts as a GSK3B inhibitor region spans residues 115 to 139; that stretch reads SPAYREAFGNALLQRLEALKRDGQS.

This sequence belongs to the GSKIP family. In terms of assembly, forms a complex composed of PRKAR2A or PRKAR2B, GSK3B and GSKIP through GSKIP interaction; facilitates PKA-induced phosphorylation of GSK3B leading to GSK3B inactivation; recruits DNM1L through GSK3B for PKA-mediated phosphorylation of DNM1L; promotes beta-catenin degradation through GSK3B-induced phosphorylation of beta-catenin; stabilizes beta-catenin and enhances Wnt-induced signaling through PKA-induced phosphorylation of beta-catenin. Interacts with GSK3B; induces GSK3B-mediated phosphorylation of GSKIP and inhibits GSK3B kinase activity. In terms of processing, phosphorylated by GSK3B.

The protein resides in the cytoplasm. It localises to the nucleus. A-kinase anchoring protein for GSK3B and PKA that regulates or facilitates their kinase activity towards their targets. The ternary complex enhances Wnt-induced signaling by facilitating the GSK3B- and PKA-induced phosphorylation of beta-catenin leading to beta-catenin degradation and stabilization respectively. Upon cAMP activation, the ternary complex contributes to neuroprotection against oxidative stress-induced apoptosis by facilitating the PKA-induced phosphorylation of DML1 and PKA-induced inactivation of GSK3B. During neurite outgrowth promotes neuron proliferation; while increases beta-catenin-induced transcriptional activity through GSK3B kinase activity inhibition, reduces N-cadherin level to promote cell cycle progression. May play a role in cleft palate formation and is required for postnatal life through modulation of the activity of GSK3B during development. The chain is GSK3-beta interaction protein from Macaca fascicularis (Crab-eating macaque).